The primary structure comprises 254 residues: Probable pectate lyase E (254 aa).

Residues 1-17 (MYQPLLLLPLLLTSAFA) form the signal peptide. N-linked (GlcNAc...) asparagine glycosylation is present at Asn-175. A disordered region spans residues 228 to 254 (DNNKKEPAKKSSGPSNACKYKEPLASC).

It belongs to the polysaccharide lyase 3 family. It depends on Ca(2+) as a cofactor.

The protein localises to the secreted. The enzyme catalyses Eliminative cleavage of (1-&gt;4)-alpha-D-galacturonan to give oligosaccharides with 4-deoxy-alpha-D-galact-4-enuronosyl groups at their non-reducing ends.. Its function is as follows. Pectinolytic enzyme consist of four classes of enzymes: pectin lyase, polygalacturonase, pectin methylesterase and rhamnogalacturonase. Among pectinolytic enzymes, pectin lyase is the most important in depolymerization of pectin, since it cleaves internal glycosidic bonds of highly methylated pectins. Favors pectate, the anion, over pectin, the methyl ester. This chain is Probable pectate lyase E (plyE), found in Aspergillus fumigatus (strain ATCC MYA-4609 / CBS 101355 / FGSC A1100 / Af293) (Neosartorya fumigata).